The chain runs to 69 residues: Putative membrane protein insertion efficiency factor (69 aa).

Belongs to the UPF0161 family.

The protein resides in the cell inner membrane. Functionally, could be involved in insertion of integral membrane proteins into the membrane. This Geobacter metallireducens (strain ATCC 53774 / DSM 7210 / GS-15) protein is Putative membrane protein insertion efficiency factor.